We begin with the raw amino-acid sequence, 173 residues long: Ribosome maturation factor RimM (173 aa).

The 80-residue stretch at 94 to 173 (EGEFYWRDLI…TIEVDWDPGF (80 aa)) folds into the PRC barrel domain.

The protein belongs to the RimM family. Binds ribosomal protein uS19.

The protein localises to the cytoplasm. An accessory protein needed during the final step in the assembly of 30S ribosomal subunit, possibly for assembly of the head region. Essential for efficient processing of 16S rRNA. May be needed both before and after RbfA during the maturation of 16S rRNA. It has affinity for free ribosomal 30S subunits but not for 70S ribosomes. The polypeptide is Ribosome maturation factor RimM (Aeromonas salmonicida (strain A449)).